Consider the following 387-residue polypeptide: Phosphoglycerate kinase (387 aa).

Substrate is bound by residues 21–23 (DLN), Arg36, and 59–62 (HLGR). Lys84 is subject to N6-acetyllysine. Arg113 and Arg146 together coordinate substrate. ATP-binding positions include Lys197, Glu314, and 340–343 (GGDT).

The protein belongs to the phosphoglycerate kinase family. In terms of assembly, monomer.

The protein localises to the cytoplasm. The catalysed reaction is (2R)-3-phosphoglycerate + ATP = (2R)-3-phospho-glyceroyl phosphate + ADP. It participates in carbohydrate degradation; glycolysis; pyruvate from D-glyceraldehyde 3-phosphate: step 2/5. This Escherichia coli O157:H7 protein is Phosphoglycerate kinase (pgk).